Consider the following 587-residue polypeptide: Sedolisin (587 aa).

Residues 1 to 32 form the signal peptide; it reads MKSSAAKQTVLCLNRYAVVALPLAIASFAAFG. A propeptide spans 33–215 (removed in mature form); the sequence is ASPASTLWAP…VGERSAAKTL (183 aa). One can recognise a Peptidase S53 domain in the interval 219 to 583; sequence TAKGHNPTEF…AKLSAYIRSN (365 aa). The interval 276 to 295 is disordered; the sequence is TIQTGSSNGDYSDDQQGQGE. Residues Glu295 and Asp299 each act as charge relay system in the active site. A disulfide bond links Cys352 and Cys391. Ser502 functions as the Charge relay system in the catalytic mechanism. Ca(2+) is bound by residues Asp543, Val544, Gly559, Gly561, and Asp563. Positions 586–587 are cleaved as a propeptide — removed in mature form; it reads GH.

Ca(2+) is required as a cofactor. Post-translationally, autocatalytically processed.

It localises to the periplasm. The enzyme catalyses Hydrolysis of the B chain of insulin at 13-Glu-|-Ala-14, 15-Leu-|-Tyr-16 and 25-Phe-|-Tyr-26 and angiotensin I at 4-Tyr-|-Ile-5. A good synthetic substrate is Lys-Pro-Ile-Glu-Phe-|-Phe(NO2)-Arg-Leu.. Inhibited by 1,2-epoxy-3-(p-nitrophenoxy)propane (EPNP), but not by carboxyl proteinase inhibitors, such as pepstatin, pepstatin Ac (S-PI) and diazoacetyl-DL-norleucine methyl ester (DAN). Inhibited by tyrostatin, pseudo-tyrostatin, AcIPF, AcIAF, chymostatin and pseudo-iodotyrostatin. Pepstatin-insensitive serine-carboxyl proteinase. In vitro can hydrolyze various synthetic peptides. Also shows activity on acid-denatured hemoglobin and on casein. In Pseudomonas sp. (strain 101) (Achromobacter parvulus T1), this protein is Sedolisin (pcp).